We begin with the raw amino-acid sequence, 445 residues long: MAERKYFGTDGVRGLVGQAPITPDFVMKLGWAAGQVLAKQGTKKVIIGKDTRISGYMLESALEAGLAAAGLQAKFTGPMPTPAVAYLTQTFRAEAGIVISASHNPYYDNGIKFFSSEGTKLPDDVEMAIEAELDKPMTCVESALLGKASRLNDAAGRYIEFCKSTFPKELSLAGLKIVIDCANGATYHIAPNVFKELGAEIITIGCEPNGTNINHEVGATDVRALQAKVVEEKADFGVAFDGDGDRIIMVDEFGEKVDGDQIAYIIARDALRRGELKGGVVGTLMTNMGMEVALRNLGIPFVRSDVGDRYVMEKLLENNWLIGAENSGHVILLDKVTTGDAIVAALQVIASIVGSKMSLKELCDGMSMFPQILVNVRFAGDNDPLESEAVKAAQADVEAKLGDNGRVLLRKSGTEPLIRVMVEGEDAELVTQYAQQIADAVKESC.

Serine 102 functions as the Phosphoserine intermediate in the catalytic mechanism. Mg(2+) is bound by residues serine 102, aspartate 241, aspartate 243, and aspartate 245. Residue serine 102 is modified to Phosphoserine.

This sequence belongs to the phosphohexose mutase family. Mg(2+) serves as cofactor. Post-translationally, activated by phosphorylation.

It carries out the reaction alpha-D-glucosamine 1-phosphate = D-glucosamine 6-phosphate. Catalyzes the conversion of glucosamine-6-phosphate to glucosamine-1-phosphate. The protein is Phosphoglucosamine mutase of Aliivibrio fischeri (strain MJ11) (Vibrio fischeri).